Here is a 223-residue protein sequence, read N- to C-terminus: N-terminal Xaa-Pro-Lys N-methyltransferase 1 (223 aa).

Position 1 is an N-acetylmethionine (Met-1). Thr-2 is subject to N-acetylthreonine; in N-terminal Xaa-Pro-Lys N-methyltransferase 1, N-terminally processed. S-adenosyl-L-methionine is bound by residues Gly-69, Arg-74, 91-93, 119-120, and Gln-135; these read DVT and LQ.

The protein belongs to the methyltransferase superfamily. NTM1 family.

The protein localises to the nucleus. It catalyses the reaction N-terminal L-alanyl-L-prolyl-L-lysyl-[protein] + 3 S-adenosyl-L-methionine = N-terminal N,N,N-trimethyl-L-alanyl-L-prolyl-L-lysyl-[protein] + 3 S-adenosyl-L-homocysteine + 3 H(+). The catalysed reaction is N-terminal L-seryl-L-prolyl-L-lysyl-[protein] + 3 S-adenosyl-L-methionine = N-terminal N,N,N-trimethyl-L-seryl-L-prolyl-L-lysyl-[protein] + 3 S-adenosyl-L-homocysteine + 3 H(+). The enzyme catalyses N-terminal L-prolyl-L-prolyl-L-lysyl-[protein] + 2 S-adenosyl-L-methionine = N-terminal N,N-dimethyl-L-prolyl-L-prolyl-L-lysyl-[protein] + 2 S-adenosyl-L-homocysteine + 2 H(+). Its function is as follows. Distributive alpha-N-methyltransferase that methylates the N-terminus of target proteins containing the N-terminal motif [Ala/Gly/Pro/Ser]-Pro-Lys when the initiator Met is cleaved. Specifically catalyzes mono-, di- or tri-methylation of the exposed alpha-amino group of the Ala, Gly or Ser residue in the [Ala/Gly/Ser]-Pro-Lys motif and mono- or di-methylation of Pro in the Pro-Pro-Lys motif. Some of the substrates may be primed by NTMT2-mediated monomethylation. Catalyzes the trimethylation of the N-terminal Gly in CENPA (after removal of Met-1). Responsible for the N-terminal methylation of KLHL31, MYL2, MYL3, RB1, RCC1, RPL23A and SET. Required during mitosis for normal bipolar spindle formation and chromosome segregation via its action on RCC1. The sequence is that of N-terminal Xaa-Pro-Lys N-methyltransferase 1 (Ntmt1) from Mus musculus (Mouse).